Reading from the N-terminus, the 307-residue chain is Holliday junction branch migration complex subunit RuvB (307 aa).

The tract at residues 1–167 is large ATPase domain (RuvB-L); that stretch reads MKLQIKPPNN…FGMILNIDYY (167 aa). ATP is bound by residues I5, G48, K51, T52, T53, 114–116, R157, Y167, and R204; that span reads DDF. Position 52 (T52) interacts with Mg(2+). A small ATPAse domain (RuvB-S) region spans residues 168–233; the sequence is SNQEIERIVS…DLAALFKSLM (66 aa). The interval 236–307 is head domain (RuvB-H); it reads KNGLQSIDVQ…RTGRNYLTSC (72 aa). The DNA site is built by K289 and R294.

The protein belongs to the RuvB family. As to quaternary structure, homohexamer. Forms an RuvA(8)-RuvB(12)-Holliday junction (HJ) complex. HJ DNA is sandwiched between 2 RuvA tetramers; dsDNA enters through RuvA and exits via RuvB. An RuvB hexamer assembles on each DNA strand where it exits the tetramer. Each RuvB hexamer is contacted by two RuvA subunits (via domain III) on 2 adjacent RuvB subunits; this complex drives branch migration. In the full resolvosome a probable DNA-RuvA(4)-RuvB(12)-RuvC(2) complex forms which resolves the HJ.

The protein localises to the cytoplasm. It catalyses the reaction ATP + H2O = ADP + phosphate + H(+). In terms of biological role, the RuvA-RuvB-RuvC complex processes Holliday junction (HJ) DNA during genetic recombination and DNA repair, while the RuvA-RuvB complex plays an important role in the rescue of blocked DNA replication forks via replication fork reversal (RFR). RuvA specifically binds to HJ cruciform DNA, conferring on it an open structure. The RuvB hexamer acts as an ATP-dependent pump, pulling dsDNA into and through the RuvAB complex. RuvB forms 2 homohexamers on either side of HJ DNA bound by 1 or 2 RuvA tetramers; 4 subunits per hexamer contact DNA at a time. Coordinated motions by a converter formed by DNA-disengaged RuvB subunits stimulates ATP hydrolysis and nucleotide exchange. Immobilization of the converter enables RuvB to convert the ATP-contained energy into a lever motion, pulling 2 nucleotides of DNA out of the RuvA tetramer per ATP hydrolyzed, thus driving DNA branch migration. The RuvB motors rotate together with the DNA substrate, which together with the progressing nucleotide cycle form the mechanistic basis for DNA recombination by continuous HJ branch migration. Branch migration allows RuvC to scan DNA until it finds its consensus sequence, where it cleaves and resolves cruciform DNA. The chain is Holliday junction branch migration complex subunit RuvB from Mycoplasma pneumoniae (strain ATCC 29342 / M129 / Subtype 1) (Mycoplasmoides pneumoniae).